We begin with the raw amino-acid sequence, 322 residues long: Ribonucleoside-diphosphate reductase small subunit (322 aa).

Asp70, Glu101, and His104 together coordinate Fe cation. Tyr108 is an active-site residue. The Fe cation site is built by Glu163, Glu197, and His200.

The protein belongs to the ribonucleoside diphosphate reductase small chain family. In terms of assembly, heterodimer of a large and a small subunit. The cofactor is Fe cation.

It catalyses the reaction a 2'-deoxyribonucleoside 5'-diphosphate + [thioredoxin]-disulfide + H2O = a ribonucleoside 5'-diphosphate + [thioredoxin]-dithiol. Functionally, provides the precursors necessary for DNA synthesis. Catalyzes the biosynthesis of deoxyribonucleotides from the corresponding ribonucleotides. The sequence is that of Ribonucleoside-diphosphate reductase small subunit (RNR2) from Plasmodium falciparum (isolate FCR-3 / Gambia).